A 153-amino-acid chain; its full sequence is 3-hydroxyacyl-[acyl-carrier-protein] dehydratase FabZ (153 aa).

H57 is a catalytic residue.

The protein belongs to the thioester dehydratase family. FabZ subfamily.

The protein resides in the cytoplasm. The enzyme catalyses a (3R)-hydroxyacyl-[ACP] = a (2E)-enoyl-[ACP] + H2O. Functionally, involved in unsaturated fatty acids biosynthesis. Catalyzes the dehydration of short chain beta-hydroxyacyl-ACPs and long chain saturated and unsaturated beta-hydroxyacyl-ACPs. This chain is 3-hydroxyacyl-[acyl-carrier-protein] dehydratase FabZ, found in Aeromonas salmonicida (strain A449).